The primary structure comprises 314 residues: tRNA N6-adenosine threonylcarbamoyltransferase (314 aa).

Fe cation-binding residues include His-106, His-110, and Tyr-127. Residues 127–131 (YVSGA), Asp-159, Gly-172, Glu-176, and Asn-255 each bind substrate. Fe cation is bound at residue Asp-283.

It belongs to the KAE1 / TsaD family. The cofactor is Fe(2+).

It is found in the cytoplasm. It catalyses the reaction L-threonylcarbamoyladenylate + adenosine(37) in tRNA = N(6)-L-threonylcarbamoyladenosine(37) in tRNA + AMP + H(+). Required for the formation of a threonylcarbamoyl group on adenosine at position 37 (t(6)A37) in tRNAs that read codons beginning with adenine. Is probably involved in the transfer of the threonylcarbamoyl moiety of threonylcarbamoyl-AMP (TC-AMP) to the N6 group of A37. The chain is tRNA N6-adenosine threonylcarbamoyltransferase from Nanoarchaeum equitans (strain Kin4-M).